Consider the following 702-residue polypeptide: Phosphoribosylformylglycinamidine synthase subunit PurL (702 aa).

The active site involves H36. ATP is bound by residues Y39 and K80. E82 serves as a coordination point for Mg(2+). Residues 83–86 and R105 each bind substrate; that span reads SHNH. The Proton acceptor role is filled by H84. D106 provides a ligand contact to Mg(2+). Q225 lines the substrate pocket. D251 is a binding site for Mg(2+). 293–295 provides a ligand contact to substrate; the sequence is ETQ. Residues D468 and G505 each coordinate ATP. S508 is a substrate binding site.

Belongs to the FGAMS family. Monomer. Part of the FGAM synthase complex composed of 1 PurL, 1 PurQ and 2 PurS subunits.

The protein resides in the cytoplasm. The enzyme catalyses N(2)-formyl-N(1)-(5-phospho-beta-D-ribosyl)glycinamide + L-glutamine + ATP + H2O = 2-formamido-N(1)-(5-O-phospho-beta-D-ribosyl)acetamidine + L-glutamate + ADP + phosphate + H(+). Its pathway is purine metabolism; IMP biosynthesis via de novo pathway; 5-amino-1-(5-phospho-D-ribosyl)imidazole from N(2)-formyl-N(1)-(5-phospho-D-ribosyl)glycinamide: step 1/2. Functionally, part of the phosphoribosylformylglycinamidine synthase complex involved in the purines biosynthetic pathway. Catalyzes the ATP-dependent conversion of formylglycinamide ribonucleotide (FGAR) and glutamine to yield formylglycinamidine ribonucleotide (FGAM) and glutamate. The FGAM synthase complex is composed of three subunits. PurQ produces an ammonia molecule by converting glutamine to glutamate. PurL transfers the ammonia molecule to FGAR to form FGAM in an ATP-dependent manner. PurS interacts with PurQ and PurL and is thought to assist in the transfer of the ammonia molecule from PurQ to PurL. The polypeptide is Phosphoribosylformylglycinamidine synthase subunit PurL (Metallosphaera sedula (strain ATCC 51363 / DSM 5348 / JCM 9185 / NBRC 15509 / TH2)).